Here is a 471-residue protein sequence, read N- to C-terminus: Putative multidrug resistance protein MdtD (471 aa).

The Periplasmic segment spans residues 1–12 (MTDLPDSTRWQL). A helical transmembrane segment spans residues 13 to 33 (WIVAFGFFMQSLDTTIVNTAI). Residues 34-48 (PSMAQSLGESPLHMH) lie on the Cytoplasmic side of the membrane. A helical transmembrane segment spans residues 49–69 (MVIVSYVLTVAVMLPASGWLA). The Periplasmic portion of the chain corresponds to 70-76 (DKVGVRN). The helical transmembrane segment at 77-97 (IFFTAIVLFTLGSLFCALSGT) threads the bilayer. The Cytoplasmic portion of the chain corresponds to 98-101 (LNEL). A helical transmembrane segment spans residues 102–124 (LLARALQGVGGAMMVPVGRLTVM). Residues 125–137 (KIVPREQYMAAMT) lie on the Periplasmic side of the membrane. Residues 138–158 (FVTLPGQVGPLLGPALGGLLV) traverse the membrane as a helical segment. Over 159 to 164 (EYASWH) the chain is Cytoplasmic. A helical membrane pass occupies residues 165 to 185 (WIFLINIPVGIIGAIATLMLM). The Periplasmic segment spans residues 186 to 196 (PNYTMQTRRFD). A helical membrane pass occupies residues 197 to 217 (LSGFLLLAVGMAVLTLALDGS). Residues 218–224 (KGTGLSP) lie on the Cytoplasmic side of the membrane. A helical membrane pass occupies residues 225–245 (LAIAGLVAVGVVALVLYLLHA). Topologically, residues 246 to 262 (RNNNRALFSLKLFRTRT) are periplasmic. A helical membrane pass occupies residues 263–283 (FSLGLAGSFAGRIGSGMLPFM). Topologically, residues 284 to 285 (TP) are cytoplasmic. Residues 286 to 306 (VFLQIGLGFSPFHAGLMMIPM) form a helical membrane-spanning segment. The Periplasmic portion of the chain corresponds to 307-341 (VLGSMGMKRIVVQVVNRFGYRRVLVATTLGLSLVT). The helical transmembrane segment at 342–362 (LLFMTTALLGWYYVLPFVLFL) threads the bilayer. At 363–395 (QGMVNSTRFSSMNTLTLKDLPDNLASSGNSLLS) the chain is on the cytoplasmic side. Residues 396-416 (MIMQLSMSIGVTIAGLLLGLF) traverse the membrane as a helical segment. At 417–430 (GSQHVSVDSGTTQT) the chain is on the periplasmic side. Residues 431-451 (VFMYTWLSMAFIIALPAFIFA) form a helical membrane-spanning segment. Topologically, residues 452–471 (RVPNDTHQNVAISRRKRSAQ) are cytoplasmic.

This sequence belongs to the major facilitator superfamily. TCR/Tet family.

It is found in the cell inner membrane. This is Putative multidrug resistance protein MdtD from Shigella flexneri serotype 5b (strain 8401).